The sequence spans 190 residues: Ribosome maturation factor RimM (190 aa).

The 77-residue stretch at 114 to 190 (DDEYYWVDLI…CITVDWQPDY (77 aa)) folds into the PRC barrel domain.

It belongs to the RimM family. In terms of assembly, binds ribosomal protein uS19.

The protein resides in the cytoplasm. In terms of biological role, an accessory protein needed during the final step in the assembly of 30S ribosomal subunit, possibly for assembly of the head region. Essential for efficient processing of 16S rRNA. May be needed both before and after RbfA during the maturation of 16S rRNA. It has affinity for free ribosomal 30S subunits but not for 70S ribosomes. The sequence is that of Ribosome maturation factor RimM from Acidovorax sp. (strain JS42).